The sequence spans 262 residues: Small ribosomal subunit protein eS4 (262 aa).

Positions 42–104 (LPLLIFLRNR…TGEFFRLIYD (63 aa)) constitute an S4 RNA-binding domain.

It belongs to the eukaryotic ribosomal protein eS4 family.

The sequence is that of Small ribosomal subunit protein eS4 (RpS4) from Lysiphlebus testaceipes (Greenbugs aphid parastoid).